The following is a 416-amino-acid chain: Gamma-glutamyl phosphate reductase (416 aa).

The protein belongs to the gamma-glutamyl phosphate reductase family.

The protein resides in the cytoplasm. The catalysed reaction is L-glutamate 5-semialdehyde + phosphate + NADP(+) = L-glutamyl 5-phosphate + NADPH + H(+). Its pathway is amino-acid biosynthesis; L-proline biosynthesis; L-glutamate 5-semialdehyde from L-glutamate: step 2/2. In terms of biological role, catalyzes the NADPH-dependent reduction of L-glutamate 5-phosphate into L-glutamate 5-semialdehyde and phosphate. The product spontaneously undergoes cyclization to form 1-pyrroline-5-carboxylate. This chain is Gamma-glutamyl phosphate reductase, found in Glaesserella parasuis serovar 5 (strain SH0165) (Haemophilus parasuis).